Here is a 336-residue protein sequence, read N- to C-terminus: NmrA-like family domain-containing oxidoreductase FrzB (336 aa).

Position 135 (K135) interacts with NADP(+).

It belongs to the NmrA-type oxidoreductase family.

It catalyses the reaction 4-{[(2S,5S)-5-[(4-hydroxyphenyl)methyl]-2,5-dihydropyrazin-2-yl]methyl}phenol + 2 NADPH + 2 H(+) = (S,S)-2,5-di-(p-hydroxybenzyl)piperazine + 2 NADP(+). The protein operates within secondary metabolite biosynthesis. NmrA-like family domain-containing oxidoreductase; part of the gene cluster that mediates the biosynthesis of the alkaloid (-)-FR901483, a potent immunosuppressant that shows efficacy in animal models and a probable inhibitor of purine nucleotide biosynthesis by targeting phosphoribosylpyrophosphate amidotransferase (PPAT). Within the pathway, FrzB catalyzes the reduction of 4-{[(2S,5S)-5-[(4-hydroxyphenyl)methyl]-2,5-dihydropyrazin-2-yl]methyl}phenol to produce the (S,S)-dityrosyl-piperazine intermediate. The biosynthesis of (-)-FR901483 starts with the condensation of two L-tyrosines to yield (S,S)-dityrosyl-piperazine. This process occurs in 3 steps with the non-canonical nonribosomal peptide synthetase FrzA catalyzing the reduction of L-tyrosine into L-tyrosinal, the spontaneous condensation of 2 L-tyrosinal units, and the subsequent reduction by the NmrA-like family domain-containing oxidoreductase FrzB. The cytochrome P450 monooxygenase FrzC then performs coupling between N10 and C1' to morph the piperazine into a 1,4-diazabicyclo[3.2.1]octane spiro-fused to a 2,5-cyclohexadienone. The dienone portion is further reduced to cyclohexanone by the flavin-dependent reductase FrzD. The methyltranserases (MTs) FrzE and FrzF are then involved in the methylation at the C10' amine and the C4 phenolic oxygen, respectively. The order of the two MTs appear to be interchangeable. Cleavage of the C9-N10' bond by the dioxygenase FrzG then leads to formation of a conjugated iminium. In addition to the oxidation of C9, an additional dehydrogenation between C7 and C8 can occur to give a likely shunt product. The next biosynthetic step is the intramolecular aldol condensation catalyzed by the newly identified aldolase FrzH to yield an aza-tricyclic product with the formation of a C9-C3' bond. The short-chain dehydrogenase/reductase FrzI then produces dephospho-(-)-FR901483 that is phosphorylated at C4'-OH into (-)-FR901483 by the phosphotransferase FrzJ. The polypeptide is NmrA-like family domain-containing oxidoreductase FrzB (Cladobotryum sp).